Here is a 788-residue protein sequence, read N- to C-terminus: Pyridoxal-dependent decarboxylase domain-containing protein 1 (788 aa).

Residues 28–40 (EDSQRRTEEENGK) show a composition bias toward basic and acidic residues. Residues 28-51 (EDSQRRTEEENGKKLISGDIPGPL) are disordered. T414 carries the post-translational modification Phosphothreonine. Phosphoserine is present on S652. The disordered stretch occupies residues 684–788 (AGVTLPPTPS…SQVEGPESLR (105 aa)). Residues T687 and T691 each carry the phosphothreonine modification. Phosphoserine occurs at positions 710, 718, and 722. A compositionally biased stretch (basic and acidic residues) spans 725–734 (HIEDLEKVER). The segment covering 738–750 (GPEQITLEASSTE) has biased composition (polar residues). 4 positions are modified to phosphoserine: S748, S757, S779, and S786. The segment covering 772 to 788 (PHPEDDHSQVEGPESLR) has biased composition (basic and acidic residues).

It belongs to the group II decarboxylase family. It depends on pyridoxal 5'-phosphate as a cofactor.

The protein is Pyridoxal-dependent decarboxylase domain-containing protein 1 (PDXDC1) of Homo sapiens (Human).